Here is a 266-residue protein sequence, read N- to C-terminus: Energy-coupling factor transporter transmembrane protein EcfT (266 aa).

Transmembrane regions (helical) follow at residues Val-26–Thr-46, Leu-47–Leu-67, Gly-69–Pro-89, Leu-116–Thr-136, Leu-151–Ile-171, Ser-192–Phe-212, and Tyr-246–Leu-266.

The protein belongs to the energy-coupling factor EcfT family. As to quaternary structure, forms a stable energy-coupling factor (ECF) transporter complex composed of 2 membrane-embedded substrate-binding proteins (S component), 2 ATP-binding proteins (A component) and 2 transmembrane proteins (T component). May be able to interact with more than 1 S component at a time.

The protein localises to the cell membrane. Its function is as follows. Transmembrane (T) component of an energy-coupling factor (ECF) ABC-transporter complex. Unlike classic ABC transporters this ECF transporter provides the energy necessary to transport a number of different substrates. This is Energy-coupling factor transporter transmembrane protein EcfT from Heliobacterium modesticaldum (strain ATCC 51547 / Ice1).